A 253-amino-acid chain; its full sequence is uncharacterized protein (253 aa).

9 residues coordinate NADP(+): isoleucine 17, serine 36, aspartate 62, asparagine 89, lysine 123, tyrosine 158, lysine 162, valine 191, and threonine 193. Catalysis depends on tyrosine 158, which acts as the Proton acceptor. The active-site Lowers pKa of active site Tyr is lysine 162.

This sequence belongs to the short-chain dehydrogenases/reductases (SDR) family.

Its subcellular location is the cytoplasm. The protein resides in the nucleus. This is an uncharacterized protein from Schizosaccharomyces pombe (strain 972 / ATCC 24843) (Fission yeast).